The chain runs to 359 residues: Lipopolysaccharide 1,6-galactosyltransferase (359 aa).

2 residues coordinate UDP: Gln244 and Glu276.

The protein belongs to the glycosyltransferase group 1 family. Glycosyltransferase 4 subfamily.

The catalysed reaction is alpha-D-Glc-(1-&gt;3)-[L-alpha-D-Hep-(1-&gt;7)]-4-O-PO3(2-)-L-alpha-D-Hep-(1-&gt;3)-4-O-PO3(2-)-L-alpha-D-Hep-(1-&gt;5)-[alpha-Kdo-(2-&gt;4)]-alpha-Kdo-(2-&gt;6)-lipid A + UDP-alpha-D-galactose = alpha-D-Gal-(1-&gt;6)-alpha-D-Glc-(1-&gt;3)-[L-alpha-D-Hep-(1-&gt;7)]-4-O-PO3(2-)-L-alpha-D-Hep-(1-&gt;3)-4-O-PO3(2-)-L-alpha-D-Hep-(1-&gt;5)-[alpha-Kdo-(2-&gt;4)]-alpha-Kdo-(2-&gt;6)-lipid A + UDP + H(+). Its pathway is bacterial outer membrane biogenesis; LPS core biosynthesis. In terms of biological role, galactosyltransferase involved in the biosynthesis of the core oligosaccharide region of lipopolysaccharide (LPS). Catalyzes the addition of galactose from UDP-galactose to the first glucose residue of the LPS outer core. In Salmonella typhimurium (strain LT2 / SGSC1412 / ATCC 700720), this protein is Lipopolysaccharide 1,6-galactosyltransferase.